The chain runs to 860 residues: MQEQYRPEEIESKVQLHWDEKRTFEVTEDESKEKYYCLSMLPYPSGRLHMGHVRNYTIGDVIARYQRMLGKNVLQPIGWDAFGLPAEGAAVKNNTAPAPWTYDNIAYMKNQLKMLGFGYDWSRELATCTPEYYRWEQKFFTELYKKGLVYKKTSAVNWCPNDQTVLANEQVIDGCCWRCDTKVERKEIPQWFIKITAYADELLNDLDKLDHWPDTVKTMQRNWIGRSEGVEITFNVNDYDNTLTVYTTRPDTFMGCTYLAVAAGHPLAQKAAENNPELAAFIDECRNTKVAEAEMATMEKKGVNTGFKAVHPLTGEEIPVWAANFVLMEYGTGAVMAVPGHDQRDYEFASKYGLNIKPVILAADGSEPDLSQQALTEKGVLFNSGEFNGLDHEAAFNAIADKLTAMGVGERKVNYRLRDWGVSRQRYWGAPIPMVTLEDGTVMPTPDDQLPVILPEDVVMDGITSPIKADPQWAKTTVNGMPALRETDTFDTFMESSWYYARYTCPEYKEGMLDSEAANYWLPVDIYIGGIEHAIMHLLYFRFFHKLMRDAGMVNSDEPAKQLLCQGMVLADAFYYVGENGERNWVSPVDAIVERDEKGRIVKAKDAAGHELVYTGMSKMSKSKNNGIDPQVMVERYGADTVRLFMMFASPADMTLEWQESGVEGANRFLKRVWKLVYEHTAKGDVAALNVDALTEDQKALRRDVHKTIAKVTDDIGRRQTFNTAIAAIMELMNKLAKAPTDGEQDRALMQEALLAVVRMLNPFTPHICFTLWQELKGEGDIDNAPWPVADEKAMVEDSTLVVVQVNGKVRAKITVPVDATEEQVRERAGQEHLVAKYLDGVTVRKVIYVPGKLLNLVVG.

A 'HIGH' region motif is present at residues 42 to 52; the sequence is PYPSGRLHMGH. A 'KMSKS' region motif is present at residues 619–623; that stretch reads KMSKS. Lys-622 lines the ATP pocket.

This sequence belongs to the class-I aminoacyl-tRNA synthetase family.

The protein localises to the cytoplasm. The enzyme catalyses tRNA(Leu) + L-leucine + ATP = L-leucyl-tRNA(Leu) + AMP + diphosphate. This is Leucine--tRNA ligase from Escherichia coli O157:H7.